A 290-amino-acid polypeptide reads, in one-letter code: Gene 69 protein (290 aa).

This Mycobacterium phage L5 (Mycobacteriophage L5) protein is Gene 69 protein (69).